We begin with the raw amino-acid sequence, 320 residues long: MPRLQQKWLNSRECPTLRGEAAKGLFPTKDDPSAHKRMSPSDKDILILCCKLGIALLCLGLLGEVAVRARRALTLDSFNSSSVQDYNLNDSENSTFLLRQGPQPTSSYKPHQPCPSEIEIRMLAKNYIFTNKTNPIGRLLVTMLRNESLPFSTIFTQIQRLEMGIENRKRHSTSVEEQVQGLRASGLEVKRGKRSALVKIGDRWWQPGTYRGPYIYRPTDAPLPYTGRYDLNFDRWVTVNGYKVLYRSLSFRERLARARPPWCMLTQEEKNDMKQQVHDYIYLGTGMSSIWGKIFHTKERTVAALIEHYSAKTYGMSYYD.

Residues 1-44 (MPRLQQKWLNSRECPTLRGEAAKGLFPTKDDPSAHKRMSPSDKD) lie on the Cytoplasmic side of the membrane. A helical membrane pass occupies residues 45–65 (ILILCCKLGIALLCLGLLGEV). Residues 66-319 (AVRARRALTL…SAKTYGMSYY (254 aa)) lie on the Extracellular side of the membrane. N-linked (GlcNAc...) asparagine; by host glycosylation is found at Asn-79, Asn-89, Asn-93, Asn-131, and Asn-146.

It belongs to the mouse mammary tumor virus PR73 superantigen family.

It localises to the membrane. Its function is as follows. Superantigen. This is Protein PR73 from Mouse mammary tumor virus (strain BR6) (MMTV).